The chain runs to 287 residues: Energy-coupling factor transporter ATP-binding protein EcfA2 (287 aa).

The region spanning 3–246 (VKFSQVSYVY…TNYVNQLHLD (244 aa)) is the ABC transporter domain. 40-47 (GQTGSGKS) is an ATP binding site.

It belongs to the ABC transporter superfamily. Energy-coupling factor EcfA family. As to quaternary structure, forms a stable energy-coupling factor (ECF) transporter complex composed of 2 membrane-embedded substrate-binding proteins (S component), 2 ATP-binding proteins (A component) and 2 transmembrane proteins (T component).

It localises to the cell membrane. Functionally, ATP-binding (A) component of a common energy-coupling factor (ECF) ABC-transporter complex. Unlike classic ABC transporters this ECF transporter provides the energy necessary to transport a number of different substrates. The chain is Energy-coupling factor transporter ATP-binding protein EcfA2 from Staphylococcus saprophyticus subsp. saprophyticus (strain ATCC 15305 / DSM 20229 / NCIMB 8711 / NCTC 7292 / S-41).